Here is a 166-residue protein sequence, read N- to C-terminus: Endoribonuclease YbeY (166 aa).

Zn(2+) contacts are provided by H132, H136, and H142.

Belongs to the endoribonuclease YbeY family. It depends on Zn(2+) as a cofactor.

Its subcellular location is the cytoplasm. Single strand-specific metallo-endoribonuclease involved in late-stage 70S ribosome quality control and in maturation of the 3' terminus of the 16S rRNA. The sequence is that of Endoribonuclease YbeY from Clostridium botulinum (strain ATCC 19397 / Type A).